Consider the following 722-residue polypeptide: Probable dipeptidyl-peptidase 5 (722 aa).

The first 18 residues, 1–18 (MGALRWLSLAAAASSALA), serve as a signal peptide directing secretion. 7 N-linked (GlcNAc...) asparagine glycosylation sites follow: Asn75, Asn78, Asn86, Asn94, Asn151, Asn253, and Asn448. Ser558 functions as the Charge relay system in the catalytic mechanism. N-linked (GlcNAc...) asparagine glycosylation occurs at Asn605. Active-site charge relay system residues include Asp641 and His673.

It belongs to the peptidase S9C family.

The protein localises to the secreted. Its function is as follows. Extracellular dipeptidyl-peptidase which removes N-terminal dipeptides sequentially from polypeptides having unsubstituted N-termini. The polypeptide is Probable dipeptidyl-peptidase 5 (dpp5) (Emericella nidulans (strain FGSC A4 / ATCC 38163 / CBS 112.46 / NRRL 194 / M139) (Aspergillus nidulans)).